We begin with the raw amino-acid sequence, 179 residues long: Large ribosomal subunit protein uL6 (179 aa).

The protein belongs to the universal ribosomal protein uL6 family. As to quaternary structure, part of the 50S ribosomal subunit.

This protein binds to the 23S rRNA, and is important in its secondary structure. It is located near the subunit interface in the base of the L7/L12 stalk, and near the tRNA binding site of the peptidyltransferase center. The chain is Large ribosomal subunit protein uL6 from Crocosphaera subtropica (strain ATCC 51142 / BH68) (Cyanothece sp. (strain ATCC 51142)).